Here is a 280-residue protein sequence, read N- to C-terminus: Probable 2-(5''-triphosphoribosyl)-3'-dephosphocoenzyme-A synthase (280 aa).

This sequence belongs to the CitG/MdcB family.

The catalysed reaction is 3'-dephospho-CoA + ATP = 2'-(5''-triphospho-alpha-D-ribosyl)-3'-dephospho-CoA + adenine. This is Probable 2-(5''-triphosphoribosyl)-3'-dephosphocoenzyme-A synthase from Lactiplantibacillus plantarum (strain ATCC BAA-793 / NCIMB 8826 / WCFS1) (Lactobacillus plantarum).